An 884-amino-acid polypeptide reads, in one-letter code: Pyruvate, phosphate dikinase (884 aa).

The interval 1 to 351 (MSTRRVYFFG…LWMLQARAGK (351 aa)) is N-terminal. Arg-99 provides a ligand contact to ATP. A linker 1 region spans residues 352 to 408 (RTGFAMVRIAIDMCKEGMLTEEEALLRIDANKINEFLFKRFDPSVKPVVLGKGIPAS). The central stretch occupies residues 409-507 (PGAAVGVICF…KFKEGDFISI (99 aa)). Thr-462 is modified (phosphothreonine; by PDRP1). His-464 (tele-phosphohistidine intermediate) is an active-site residue. Positions 508–542 (NGTTGEIYNGAVQTIEPGITDDLQTIMDWSDKYRV) are linker 2. The segment at 543-884 (LKIRTNADTP…IAAIKARTNQ (342 aa)) is C-terminal. Positions 570, 626, 753, 774, 775, 776, and 777 each coordinate substrate. Position 753 (Glu-753) interacts with Mg(2+). Asp-777 provides a ligand contact to Mg(2+). Residue Cys-839 is the Proton donor of the active site.

The protein belongs to the PEP-utilizing enzyme family. Homodimer. It depends on Mg(2+) as a cofactor. Post-translationally, phosphorylation of Thr-462 in the dark inactivates the enzyme. Dephosphorylation upon light stimulation reactivates the enzyme.

The catalysed reaction is pyruvate + phosphate + ATP = phosphoenolpyruvate + AMP + diphosphate + H(+). Activated by light-induced dephosphorylation. Inhibited by dark-induced phosphorylation. Both reactions are catalyzed by PDRP1. Catalyzes the reversible phosphorylation of pyruvate and phosphate. The chain is Pyruvate, phosphate dikinase from Giardia intestinalis (Giardia lamblia).